The following is a 442-amino-acid chain: Protein bag of marbles (442 aa).

The segment at 201–250 (FDMPVKSTMPKSLNVRYQLQVLCTKVERFLVQQRRTLEANRHFDFEKYDE) is required for interaction with ubiquitin. The tract at residues 408-442 (VSMEQPSASEEEFEETEEVPSSPPRHTGRVPRFRS) is disordered. Positions 416–425 (SEEEFEETEE) are enriched in acidic residues. Positions 433-442 (HTGRVPRFRS) are enriched in basic residues.

As to quaternary structure, interacts (via central region) with ubiquitin. Interacts (via C-terminus) with otu (via OTU domain); the interaction enhances otu aggregation into amyloid-like structures and enhances its deubiquitinase activity. Together with otu interacts with CycA/cyclin-A (via C-terminus); the interaction stabilizes CycA by promoting and enhancing otu dependent deubiquitination of CycA. Together with otu interacts with Traf6. Part of a complex composed of at least tut, bam and bgcn; complex formation does not require RNA. Interacts (via C-terminus) with bgcn; the interaction is direct and is not disrupted by eIF4A. Interacts with eIF4A (via multiple contacts); the interaction is direct and is not disrupted by bgcn. Interacts (via N-terminus) with tut; the interaction is direct and mediates the interaction between tut and bgcn. As part of the bam-bgcn-tut complex associates with twin; may recruit the CCR4-NOT1 deadenylation complex to mRNA 3'-UTRs to mediate post-transcriptional regulation of expression. Part of a complex composed of at least mei-P26, bam, bgcn and Sxl; this complex is involved in translational repression of nanos mRNA. Ubiquitinated (C-terminal region). In cystoblasts and/or very early cystocytes in testis (at protein level); expression levels are regulated by mei-P26. In cystoblasts and/or very early cystocytes in ovary. Expressed in the gut; expression levels increase with age.

It is found in the cytoplasm. Its function is as follows. Regulatory component of a deubiquitinase complex consisting of bam and otu. The complex deubiquitinates K63-linked polyubiquitinated proteins, antagonizing the ubiquitination activity of Traf6 and regulating the IMD immune signaling pathway. Otu-bam deubiquitinase activity is regulated by Traf6 dependent immune signaling regulation of bam expression levels; this forms a feedback loop that regulates the IMD immune signaling pathway and balances gut immune activity during aging. The complex deubiquitinates and stabilizes CycA/cyclin-A to regulate CycA-dependent differentiation. Required to initiate both male and female gametogenesis. Part of a complex with bgcn involved in 3'-UTR-dependent translational repression of a subset of mRNAs, including those for mei-P26, nanos and shg/E-cadherin. Repression of mei-P26 is targeted by let-7 miRNA. Involved in a regulatory cascade with mei-P26 to control the progression of cystocytes through transit amplification and the switch to spermatocyte differentiation; mei-P26 facilitates bam accumulation, which in turn represses translation of mei-P26. Forms a complex with tut and bgcn involved in 3'-UTR-dependent post-transcriptional repression of several 3'-RNA processing factors, which promotes germline stem cell lineage differentiation and mitosis-to-meiosis transition. This is Protein bag of marbles from Drosophila melanogaster (Fruit fly).